We begin with the raw amino-acid sequence, 662 residues long: DCC-interacting protein 13-beta (662 aa).

In terms of domain architecture, BAR spans 3–268; sequence AVDKLLLEEA…ESVYTPDIDV (266 aa). Residues 277–375 enclose the PH domain; it reads LIQKTGYLNL…WICAINNISR (99 aa). Positions 486–635 constitute a PID domain; it reads SLLQQMFIVR…LMLSVPLTND (150 aa). The disordered stretch occupies residues 643–662; sequence DQADDTGGSPSDHRGAESEA. The segment covering 653 to 662 has biased composition (basic and acidic residues); the sequence is SDHRGAESEA.

Homodimer. Homotetramer. Binds RAB5A/Rab5 through an N-terminal domain. This interaction is essential for its recruitment to endosomal membranes as well as its role in cell proliferation. Binds subunits of the NuRD/MeCP1 complex. Interacts with FSHR; interaction is independent of follicle stimulating hormone stimulation. Interacts with APPL1; the interaction is decreased by adiponectin in a time-dependent manner. Forms a complex comprising APPL1, RUVBL2, CTNNB1, HDAC1 and HDAC2; interaction reduces interaction between CTNNB1, HDAC1, HDAC2 and RUVBL2 leading to the decrease of deacetylase activity of this complex; affects the recruitment of repressive complexes to the Wnt target genes. Interacts (via BAR domain) with TBC1D1; interaction is dependent of TBC1D1 phosphorylation at 'Ser-235'; interaction diminishes the phosphorylation of TBC1D1 at 'Thr-596', resulting in inhibition of SLC2A4 translocation and glucose uptake. Interacts with ANXA2; targets APPL2 to endosomes and acting in parallel to RAB5A. Interacts with RAB31 (in GTP-bound form); interaction contributes to or enhances recruitment of APPL2 to the phagosomes; interaction enhances Fc-gamma receptor-mediated phagocytosis through PI3K/Akt signaling in macrophages. Interacts with PIK3R1; forms a complex with PIK3R1 and APPL1. Interacts (via BAR domain) with ADIPOR1; hinders the accessibility of APPL1 to ADIPOR1; negatively regulates adiponectin signaling; ADIPOQ dissociates this interaction and facilitates the recruitment of APPL1 to ADIPOR1. Interacts (via BAR domain) with ADIPOR2; ADIPOQ dissociates this interaction.

The protein localises to the early endosome membrane. It localises to the nucleus. It is found in the cell membrane. The protein resides in the endosome membrane. Its subcellular location is the cytoplasm. The protein localises to the cytoplasmic vesicle. It localises to the phagosome. It is found in the cell projection. The protein resides in the ruffle. Its subcellular location is the ruffle membrane. The protein localises to the phagosome membrane. Its function is as follows. Multifunctional adapter protein that binds to various membrane receptors, nuclear factors and signaling proteins to regulate many processes, such as cell proliferation, immune response, endosomal trafficking and cell metabolism. Regulates signaling pathway leading to cell proliferation through interaction with RAB5A and subunits of the NuRD/MeCP1 complex. Plays a role in immune response by modulating phagocytosis, inflammatory and innate immune responses. In macrophages, enhances Fc-gamma receptor-mediated phagocytosis through interaction with RAB31 leading to activation of PI3K/Akt signaling. In response to LPS, modulates inflammatory responses by playing a key role on the regulation of TLR4 signaling and in the nuclear translocation of RELA/NF-kappa-B p65 and the secretion of pro- and anti-inflammatory cytokines. Also functions as a negative regulator of innate immune response via inhibition of AKT1 signaling pathway by forming a complex with APPL1 and PIK3R1. Plays a role in endosomal trafficking of TGFBR1 from the endosomes to the nucleus. Plays a role in cell metabolism by regulating adiponecting ans insulin signaling pathways and adaptative thermogenesis. In muscle, negatively regulates adiponectin-simulated glucose uptake and fatty acid oyidation by inhibiting adiponectin signaling pathway through APPL1 sequestration thereby antagonizing APPL1 action. In muscles, negatively regulates insulin-induced plasma membrane recruitment of GLUT4 and glucose uptake through interaction with TBC1D1. Plays a role in cold and diet-induced adaptive thermogenesis by activating ventromedial hypothalamus (VMH) neurons throught AMPK inhibition which enhances sympathetic outflow to subcutaneous white adipose tissue (sWAT), sWAT beiging and cold tolerance. Also plays a role in other signaling pathways namely Wnt/beta-catenin, HGF and glucocorticoid receptor signaling. Positive regulator of beta-catenin/TCF-dependent transcription through direct interaction with RUVBL2/reptin resulting in the relief of RUVBL2-mediated repression of beta-catenin/TCF target genes by modulating the interactions within the beta-catenin-reptin-HDAC complex. May affect adult neurogenesis in hippocampus and olfactory system via regulating the sensitivity of glucocorticoid receptor. Required for fibroblast migration through HGF cell signaling. The protein is DCC-interacting protein 13-beta of Rattus norvegicus (Rat).